A 490-amino-acid polypeptide reads, in one-letter code: MGGLHQGHARLIATAVTSCGGKGSVLVSTFVNPLQFGVDEDFDCYPRTFEDDCALAEQAGASALWCPDERQVYPYGTSEGWRLQAPARLTAHLCGPWRSGHFDGVVTVVMRLLGLVRPHQLWLGEKDWQQLTILRHLVNDFGLRVRVRGCPTVREGDGLAASSRNRYLGDAQRTVASAFSSALCATARDVCAGSVDEASAQVALRQQLREAGLEVEYVETVDPVTLQPARPGRSIRLLAAAVRCGETRLIDHVFIMTRSPIVAIDGPAGAGKSTVTRAFAERMGLLYLDTGAMYRAVTWWVQSNGADPSSAPAVEALLEGLEVDLSPLKDGVQTVRVNGRDITDAIRDPEVTGSVSLVAAHPCVRALLTKQQQRLGERGGLVAEGRDIGTAVFPDADVKVFLTATPEERARRRAKDLEARGHAVPDLAALEAQIVERDRLDSTREVAPLVQADDATELITDGMSIEAVIDALEDLFRFRVAKEIWPTPQG.

1 to 8 (MGGLHQGH) contributes to the ATP binding site. A pantoate--beta-alanine ligase region spans residues 1–253 (MGGLHQGHAR…CGETRLIDHV (253 aa)). The Proton donor role is filled by H8. (R)-pantoate is bound at residue Q35. Position 35 (Q35) interacts with beta-alanine. An ATP-binding site is contributed by 124 to 127 (GEKD). Q130 serves as a coordination point for (R)-pantoate. ATP contacts are provided by residues V153 and 161–164 (ASSR). The interval 254–490 (FIMTRSPIVA…AKEIWPTPQG (237 aa)) is cytidylate kinase.

The protein in the N-terminal section; belongs to the pantothenate synthetase family. This sequence in the C-terminal section; belongs to the cytidylate kinase family. Type 1 subfamily.

It is found in the cytoplasm. It catalyses the reaction (R)-pantoate + beta-alanine + ATP = (R)-pantothenate + AMP + diphosphate + H(+). The enzyme catalyses CMP + ATP = CDP + ADP. The catalysed reaction is dCMP + ATP = dCDP + ADP. The protein operates within cofactor biosynthesis; (R)-pantothenate biosynthesis; (R)-pantothenate from (R)-pantoate and beta-alanine: step 1/1. Catalyzes the condensation of pantoate with beta-alanine in an ATP-dependent reaction via a pantoyl-adenylate intermediate. Functionally, catalyzes the transfer of a phosphate group from ATP to either CMP or dCMP to form CDP or dCDP and ADP, respectively. The chain is Bifunctional pantoate ligase/cytidylate kinase from Synechococcus sp. (strain WH7803).